The chain runs to 512 residues: Nephrocan (512 aa).

The N-terminal stretch at Met-1 to Ala-19 is a signal peptide. The 25-residue stretch at Asn-20–Gly-44 folds into the LRRNT domain. 17 LRR repeats span residues Ile-45–Gly-69, Leu-71–Thr-93, Leu-94–Asn-117, Glu-119–Gly-138, Leu-139–Pro-162, Ala-164–Leu-185, Pro-186–Ser-208, Gln-210–Ser-232, Leu-234–His-253, Leu-254–Leu-276, Thr-277–Arg-299, Gln-301–Asp-320, Leu-321–Arg-344, Ser-346–Arg-371, Asp-373–Asp-389, Leu-390–Gly-413, and Pro-415–Ala-442. N-linked (GlcNAc...) asparagine glycosylation occurs at Asn-66. Positions Glu-474–Lys-484 are enriched in basic and acidic residues. Residues Glu-474–Asp-512 are disordered. Over residues Asp-503–Asp-512 the composition is skewed to acidic residues.

The protein belongs to the small leucine-rich proteoglycan (SLRP) family. N-glycosylated. Expressed at highest levels in the kidney, where it is primarily detected in the epithelial cells of distal tubules and collecting ducts, and more weakly in proximal epithelial cells. Expressed at lower levels in heart and lung (at protein level). Detected in skeletal muscle.

The protein localises to the secreted. Its function is as follows. May inhibit TGF-beta signaling. This chain is Nephrocan, found in Mus musculus (Mouse).